Consider the following 482-residue polypeptide: 7-deoxyloganetic acid glucosyl transferase (482 aa).

The Proton acceptor role is filled by His-22. Residue His-22 participates in an anthocyanidin binding. Asp-127 functions as the Charge relay in the catalytic mechanism. Positions 149, 362, 364, 379, 382, 383, 384, and 387 each coordinate UDP-alpha-D-glucose. Ala-402 lines the an anthocyanidin pocket. Residues Asp-403 and Gln-404 each coordinate UDP-alpha-D-glucose.

It belongs to the UDP-glycosyltransferase family. Expressed in the leaf internal phloem-associated parenchyma (IPAP) inside the mesophyll. Mostly observed in leaves, roots and stems, and, to a lower extent, in flowers.

It is found in the nucleus. Its subcellular location is the cytoplasm. The protein localises to the cytosol. It carries out the reaction 7-deoxyloganetate + UDP-alpha-D-glucose = 7-deoxyloganate + UDP + H(+). It participates in alkaloid biosynthesis. In terms of biological role, component of the seco-iridoid and derivatives monoterpenoid indole alkaloids (MIAs, e.g. vincristine, quinine, and strychnine) biosynthesis pathway. Catalyzes the glucosylation of 7-deoxyloganetic acid to form 7-deoxyloganic acid using UDP-glucose as the sugar donor. Inactive with loganetic acid, loganetin, iridodial, iridotrial, 8-OH-geraniol, jasmonic acid, gibberellic acid, indole acetic acid, salicylic acid, abscisic acid, zeatin and luteolin. The polypeptide is 7-deoxyloganetic acid glucosyl transferase (Catharanthus roseus (Madagascar periwinkle)).